The following is a 351-amino-acid chain: Uroporphyrinogen decarboxylase (351 aa).

Substrate contacts are provided by residues 25 to 29 (RQAGR), Asp74, Tyr151, Ser206, and His325.

This sequence belongs to the uroporphyrinogen decarboxylase family. In terms of assembly, homodimer.

It localises to the cytoplasm. The enzyme catalyses uroporphyrinogen III + 4 H(+) = coproporphyrinogen III + 4 CO2. The protein operates within porphyrin-containing compound metabolism; protoporphyrin-IX biosynthesis; coproporphyrinogen-III from 5-aminolevulinate: step 4/4. Its function is as follows. Catalyzes the decarboxylation of four acetate groups of uroporphyrinogen-III to yield coproporphyrinogen-III. This chain is Uroporphyrinogen decarboxylase, found in Chlorobaculum parvum (strain DSM 263 / NCIMB 8327) (Chlorobium vibrioforme subsp. thiosulfatophilum).